The following is a 126-amino-acid chain: Fluoride-specific ion channel FluC (126 aa).

The next 4 membrane-spanning stretches (helical) occupy residues 5–25, 34–54, 67–87, and 95–115; these read IAVICLAACVGALMRWGFALW, WGTLAVNLIGGYCIGIALAVF, LVITGFLGTLTTFSSFSGEVV, and FGLAFGTIALHLGGSLALTWA. Gly-74 and Thr-77 together coordinate Na(+).

Belongs to the fluoride channel Fluc/FEX (TC 1.A.43) family.

The protein resides in the cell inner membrane. The catalysed reaction is fluoride(in) = fluoride(out). Its activity is regulated as follows. Na(+) is not transported, but it plays an essential structural role and its presence is essential for fluoride channel function. In terms of biological role, fluoride-specific ion channel. Important for reducing fluoride concentration in the cell, thus reducing its toxicity. This chain is Fluoride-specific ion channel FluC, found in Paracidovorax citrulli (strain AAC00-1) (Acidovorax citrulli).